The chain runs to 458 residues: Argininosuccinate lyase (458 aa).

The protein belongs to the lyase 1 family. Argininosuccinate lyase subfamily.

Its subcellular location is the cytoplasm. It carries out the reaction 2-(N(omega)-L-arginino)succinate = fumarate + L-arginine. The protein operates within amino-acid biosynthesis; L-arginine biosynthesis; L-arginine from L-ornithine and carbamoyl phosphate: step 3/3. The polypeptide is Argininosuccinate lyase (Heliobacterium mobile (Heliobacillus mobilis)).